We begin with the raw amino-acid sequence, 327 residues long: Phenylalanine--tRNA ligase alpha subunit (327 aa).

E252 contributes to the Mg(2+) binding site.

This sequence belongs to the class-II aminoacyl-tRNA synthetase family. Phe-tRNA synthetase alpha subunit type 1 subfamily. As to quaternary structure, tetramer of two alpha and two beta subunits. It depends on Mg(2+) as a cofactor.

It is found in the cytoplasm. The enzyme catalyses tRNA(Phe) + L-phenylalanine + ATP = L-phenylalanyl-tRNA(Phe) + AMP + diphosphate + H(+). This chain is Phenylalanine--tRNA ligase alpha subunit, found in Shigella sonnei (strain Ss046).